We begin with the raw amino-acid sequence, 90 residues long: Small ribosomal subunit protein uS17 (90 aa).

The protein belongs to the universal ribosomal protein uS17 family. Part of the 30S ribosomal subunit.

Its function is as follows. One of the primary rRNA binding proteins, it binds specifically to the 5'-end of 16S ribosomal RNA. The polypeptide is Small ribosomal subunit protein uS17 (Burkholderia thailandensis (strain ATCC 700388 / DSM 13276 / CCUG 48851 / CIP 106301 / E264)).